We begin with the raw amino-acid sequence, 228 residues long: ATP-dependent dethiobiotin synthetase BioD (228 aa).

12 to 17 is a binding site for ATP; sequence EIGKTT. Residue threonine 16 participates in Mg(2+) binding. The active site involves lysine 37. Serine 41 serves as a coordination point for substrate. ATP is bound by residues aspartate 54, 116–119, and 205–207; these read EGAG and PRL. The Mg(2+) site is built by aspartate 54 and glutamate 116.

Belongs to the dethiobiotin synthetase family. In terms of assembly, homodimer. Mg(2+) serves as cofactor.

The protein resides in the cytoplasm. The enzyme catalyses (7R,8S)-7,8-diammoniononanoate + CO2 + ATP = (4R,5S)-dethiobiotin + ADP + phosphate + 3 H(+). Its pathway is cofactor biosynthesis; biotin biosynthesis; biotin from 7,8-diaminononanoate: step 1/2. Functionally, catalyzes a mechanistically unusual reaction, the ATP-dependent insertion of CO2 between the N7 and N8 nitrogen atoms of 7,8-diaminopelargonic acid (DAPA, also called 7,8-diammoniononanoate) to form a ureido ring. In Pseudomonas aeruginosa (strain ATCC 15692 / DSM 22644 / CIP 104116 / JCM 14847 / LMG 12228 / 1C / PRS 101 / PAO1), this protein is ATP-dependent dethiobiotin synthetase BioD.